The primary structure comprises 1081 residues: DNA polymerase delta catalytic subunit (1081 aa).

The interval 1 to 22 (MTSKRPGGSSFQPEVKRKRESD) is disordered. Positions 981, 984, 998, and 1001 each coordinate Zn(2+). The segment at 981–1001 (CLGCKSVLPRAESENAVCKHC) adopts a CysA-type zinc-finger fold. 4 residues coordinate [4Fe-4S] cluster: C1030, C1033, C1043, and C1048. Positions 1030 to 1048 (CQNCAKTMQDKVNCSARDC) match the CysB motif motif.

The protein belongs to the DNA polymerase type-B family. Heterodimer with subunits of 125 kDa and 50 kDa. The 125 kDa subunit contains the polymerase active site and most likely the active site for the 3'-5' exonuclease activity. It depends on [4Fe-4S] cluster as a cofactor.

It localises to the nucleus. It carries out the reaction DNA(n) + a 2'-deoxyribonucleoside 5'-triphosphate = DNA(n+1) + diphosphate. Functionally, possesses two enzymatic activities: DNA synthesis (polymerase) and an exonucleolytic activity that degrades single stranded DNA in the 3'- to 5'-direction. Required with its accessory proteins (proliferating cell nuclear antigen (PCNA) and replication factor C (RFC) or activator 1) for leading strand synthesis. Also involved in completing Okazaki fragments initiated by the DNA polymerase alpha/primase complex. The polypeptide is DNA polymerase delta catalytic subunit (Caenorhabditis elegans).